The chain runs to 34 residues: Mu-theraphotoxin-CCy1a (34 aa).

3 disulfide bridges follow: Cys3-Cys18, Cys10-Cys23, and Cys17-Cys30.

This sequence belongs to the neurotoxin 10 (Hwtx-1) family. 14 (Hntx-1) subfamily. As to expression, expressed by the venom gland.

The protein resides in the secreted. Voltage-gated sodium channel Nav1.7/SCN9A inhibitor. The chain is Mu-theraphotoxin-CCy1a from Chromatopelma cyaneopubescens (Greenbottle blue tarantula).